The primary structure comprises 435 residues: Serine/threonine-protein kinase 40 (435 aa).

Residues 1 to 10 (MKRRASDRGA) are compositionally biased toward basic and acidic residues. Residues 1–25 (MKRRASDRGAGETSARAKALGSGIS) form a disordered region. The Protein kinase domain occupies 35–332 (FILGPRLGNS…DVLEALSAII (298 aa)). ATP-binding positions include 41 to 49 (LGNSPVPSI) and lysine 66. The Proton acceptor role is filled by aspartate 197.

The protein belongs to the protein kinase superfamily. CAMK Ser/Thr protein kinase family.

Its subcellular location is the nucleus. It is found in the cytoplasm. It catalyses the reaction L-seryl-[protein] + ATP = O-phospho-L-seryl-[protein] + ADP + H(+). The catalysed reaction is L-threonyl-[protein] + ATP = O-phospho-L-threonyl-[protein] + ADP + H(+). Its function is as follows. May be a negative regulator of NF-kappa-B and p53-mediated gene transcription. The protein is Serine/threonine-protein kinase 40 (STK40) of Pongo abelii (Sumatran orangutan).